Here is a 57-residue protein sequence, read N- to C-terminus: Large ribosomal subunit protein bL32 (57 aa).

Residues 1 to 19 (MATPKRRMSRANTRSRRSQ) are compositionally biased toward basic residues. Residues 1 to 21 (MATPKRRMSRANTRSRRSQWK) are disordered.

It belongs to the bacterial ribosomal protein bL32 family.

The protein is Large ribosomal subunit protein bL32 of Mycobacterium ulcerans (strain Agy99).